Here is a 309-residue protein sequence, read N- to C-terminus: WD repeat domain phosphoinositide-interacting protein 4 (309 aa).

Residues glutamine 4–histidine 42 form a WD 1 repeat. The short motif at leucine 180–glycine 183 is the L/FRRG motif element. Residues threonine 184 to arginine 223 form a WD 2 repeat.

Belongs to the WD repeat PROPPIN family. As to quaternary structure, interacts with WIPI1. Interacts with WIPI2. Interacts with ATG2A and ATG2B. Interacts with ULK1. May interact with the PRKAA1, PRKAA2, PRKAB1 and PRKAG1 subunits of the AMPK kinase. May interact with NUDC.

The protein localises to the preautophagosomal structure. The protein resides in the cytoplasm. Functionally, component of the autophagy machinery that controls the major intracellular degradation process by which cytoplasmic materials are packaged into autophagosomes and delivered to lysosomes for degradation. Binds phosphatidylinositol 3-phosphate (PtdIns3P). Activated by the STK11/AMPK signaling pathway upon starvation, WDR45 is involved in autophagosome assembly downstream of WIPI2, regulating the size of forming autophagosomes. Together with WIPI1, promotes ATG2 (ATG2A or ATG2B)-mediated lipid transfer by enhancing ATG2-association with phosphatidylinositol 3-monophosphate (PI3P)-containing membranes. Probably recruited to membranes through its PtdIns3P activity. The protein is WD repeat domain phosphoinositide-interacting protein 4 (Wdr45) of Rattus norvegicus (Rat).